We begin with the raw amino-acid sequence, 65 residues long: U11-theraphotoxin-Cg1b (65 aa).

The first 21 residues, 1–21 (MKTTILVVILGLTLLFALSAA), serve as a signal peptide directing secretion. The propeptide occupies 22–29 (TELKDEER). 3 disulfides stabilise this stretch: Cys31/Cys45, Cys38/Cys50, and Cys44/Cys57.

The protein belongs to the neurotoxin 10 (Hwtx-1) family. 32 (Jztx-16) subfamily. As to expression, expressed by the venom gland.

Its subcellular location is the secreted. Probable ion channel inhibitor. The protein is U11-theraphotoxin-Cg1b of Chilobrachys guangxiensis (Chinese earth tiger tarantula).